Reading from the N-terminus, the 380-residue chain is Interleukin-13 receptor subunit alpha-2 (380 aa).

The signal sequence occupies residues 1 to 26; it reads MAFVCLAIGCLYTFLISTTFGCTSSS. Over 27–343 the chain is Extracellular; the sequence is DTEIKVNPPQ…EDLSKKTLLR (317 aa). 3 consecutive Fibronectin type-III domains span residues 34–134, 139–235, and 240–333; these read PPQD…SPQG, KVQD…LQNI, and PPVY…CWEG. A disulfide bond links C65 and C113. N115 carries an N-linked (GlcNAc...) asparagine glycan. 2 disulfide bridges follow: C145–C155 and C184–C197. 3 N-linked (GlcNAc...) asparagine glycosylation sites follow: N215, N290, and N299. The cysteines at positions 269 and 316 are disulfide-linked. The WSXWS motif motif lies at 322-326; the sequence is WSEWS. The helical transmembrane segment at 344-363 threads the bilayer; the sequence is FWLPFGFILILVIFVTGLLL. Over 364 to 380 the chain is Cytoplasmic; sequence RKPNTYPKMIPEFFCDT.

The protein belongs to the type I cytokine receptor family. Type 5 subfamily. In terms of assembly, interacts with IL4RA. Interacts with high affinity to interleukin-13 (IL13), but not to interleukin-4 (IL4). Cleaved by MMP8 leading to a soluble form that is also able to interact with IL13.

It is found in the cell membrane. Its function is as follows. Cell surface receptor that plays a role in the regulation of IL-13-mediated responses. Functions as a decoy receptor that inhibits IL-13- and IL-4-mediated signal transduction via the JAK-STAT pathway and thereby modulates immune responses and inflammation. Serves as a functional signaling receptor for IL-13 in an alternative pathway involving AP-1 ultimately leading to the production of TGFB1. This chain is Interleukin-13 receptor subunit alpha-2 (IL13RA2), found in Homo sapiens (Human).